A 78-amino-acid polypeptide reads, in one-letter code: MEQAPEDQGPQRKPHNEWTLELLEELKNEAVRHFPRIWLHGLGQHIYETYGDTWAGVEAIIRILQQLLFIHFQNWVST.

A homooligomerization region spans residues 1-42 (MEQAPEDQGPQRKPHNEWTLELLEELKNEAVRHFPRIWLHGL).

It belongs to the HIV-1 VPR protein family. In terms of assembly, homooligomer, may form homodimer. Interacts with p6-gag region of the Pr55 Gag precursor protein through a (Leu-X-X)4 motif near the C-terminus of the P6gag protein. Interacts with host UNG. May interact with host RAD23A/HHR23A. Interacts with host VPRBP/DCAF1, leading to hijack the CUL4A-RBX1-DDB1-DCAF1/VPRBP complex, mediating ubiquitination of host proteins such as TERT and ZGPAT and arrest of the cell cycle in G2 phase. Phosphorylated on several residues by host. These phosphorylations regulate VPR activity for the nuclear import of the HIV-1 pre-integration complex.

It localises to the virion. The protein resides in the host nucleus. The protein localises to the host extracellular space. During virus replication, may deplete host UNG protein, and incude G2-M cell cycle arrest. Acts by targeting specific host proteins for degradation by the 26S proteasome, through association with the cellular CUL4A-DDB1 E3 ligase complex by direct interaction with host VPRPB/DCAF-1. Cell cycle arrest reportedly occurs within hours of infection and is not blocked by antiviral agents, suggesting that it is initiated by the VPR carried into the virion. Additionally, VPR induces apoptosis in a cell cycle dependent manner suggesting that these two effects are mechanistically linked. Detected in the serum and cerebrospinal fluid of AIDS patient, VPR may also induce cell death to bystander cells. Its function is as follows. During virus entry, plays a role in the transport of the viral pre-integration (PIC) complex to the host nucleus. This function is crucial for viral infection of non-dividing macrophages. May act directly at the nuclear pore complex, by binding nucleoporins phenylalanine-glycine (FG)-repeat regions. This Homo sapiens (Human) protein is Protein Vpr.